The primary structure comprises 127 residues: Lysozyme C (127 aa).

A C-type lysozyme domain is found at 1 to 127 (KDIPRCELVK…KDLSSYVRGC (127 aa)). Cystine bridges form between cysteine 6–cysteine 127, cysteine 30–cysteine 115, cysteine 64–cysteine 80, and cysteine 76–cysteine 94. Active-site residues include glutamate 35 and aspartate 52. 5 residues coordinate Ca(2+): lysine 82, aspartate 85, asparagine 87, aspartate 90, and aspartate 91.

Belongs to the glycosyl hydrolase 22 family. In terms of assembly, monomer. The cofactor is Ca(2+).

Its subcellular location is the secreted. It carries out the reaction Hydrolysis of (1-&gt;4)-beta-linkages between N-acetylmuramic acid and N-acetyl-D-glucosamine residues in a peptidoglycan and between N-acetyl-D-glucosamine residues in chitodextrins.. Lysozymes have primarily a bacteriolytic function; those in tissues and body fluids are associated with the monocyte-macrophage system and enhance the activity of immunoagents. The chain is Lysozyme C (LYZ) from Columba livia (Rock dove).